A 299-amino-acid chain; its full sequence is Leucine zipper transcription factor-like protein 1 (299 aa).

Residues 145 to 299 (GTTELLNKEI…KRLAKYESED (155 aa)) form an interaction with BSS9 region. A coiled-coil region spans residues 145 to 299 (GTTELLNKEI…KRLAKYESED (155 aa)).

This sequence belongs to the LZTFL1 family. Self-associates. Interacts with BBS9; the interaction mediates the association of LZTL1 with the BBsome complex and regulates BBSome ciliary trafficking.

The protein resides in the cytoplasm. In terms of biological role, regulates ciliary localization of the BBSome complex. Together with the BBSome complex, controls SMO ciliary trafficking and contributes to the sonic hedgehog (SHH) pathway regulation. May play a role in neurite outgrowth. May have tumor suppressor function. This Rattus norvegicus (Rat) protein is Leucine zipper transcription factor-like protein 1 (Lztfl1).